The primary structure comprises 374 residues: Chaperone protein DnaJ (374 aa).

The J domain maps to 5-70 (DYYEVLGVAR…DKRARYDRFG (66 aa)). The segment at 135 to 213 (GDEVTLRLPK…CKGSGILQQV (79 aa)) adopts a CR-type zinc-finger fold. Positions 148, 151, 165, 168, 187, 190, 201, and 204 each coordinate Zn(2+). CXXCXGXG motif repeat units lie at residues 148-155 (CDECNGSG), 165-172 (CRHCGGNG), 187-194 (CPVCRGEG), and 201-208 (CPKCKGSG).

This sequence belongs to the DnaJ family. In terms of assembly, homodimer. The cofactor is Zn(2+).

The protein localises to the cytoplasm. Participates actively in the response to hyperosmotic and heat shock by preventing the aggregation of stress-denatured proteins and by disaggregating proteins, also in an autonomous, DnaK-independent fashion. Unfolded proteins bind initially to DnaJ; upon interaction with the DnaJ-bound protein, DnaK hydrolyzes its bound ATP, resulting in the formation of a stable complex. GrpE releases ADP from DnaK; ATP binding to DnaK triggers the release of the substrate protein, thus completing the reaction cycle. Several rounds of ATP-dependent interactions between DnaJ, DnaK and GrpE are required for fully efficient folding. Also involved, together with DnaK and GrpE, in the DNA replication of plasmids through activation of initiation proteins. The polypeptide is Chaperone protein DnaJ (Nitratidesulfovibrio vulgaris (strain DSM 19637 / Miyazaki F) (Desulfovibrio vulgaris)).